Reading from the N-terminus, the 780-residue chain is MATQSDLMELEMAMDPDRKAAVSHWQQQSYLDSGIHSGATTTAPSLSGKGNPEDDDVDNQVLYEWEQGFNQSFNQEQVADIDGQYAMTRAQRVRAAMFPETLDEGMQIPSTQFDSAHPTNVQRLAEPSQMLKHAVVNLINYQDDAELATRAIPELTKLLNDEDQVVVNKAAVMVHQLSKKEASRHAIMRSPQMVSAIVRTMQNTNDVETARCTSGTLHNLSHHREGLLAIFKSGGIPALVKMLGSPVDSVLFYAITTLHNLLLHQEGAKMAVRLAGGLQKMVALLNKTNVKFLAITTDCLQILAYGNQESKLIILASGGPQALVNIMRTYTYEKLLWTTSRVLKVLSVCSSNKPAIVEAGGMQALGLHLTDPSQRLVQNCLWTLRNLSDAATKQEGMEGLLGTLVQLLGSDDINVVTCAAGILSNLTCNNYKNKMMVCQVGGIEALVRTVLRAGDREDITEPAICALRHLTSRHQDAEMAQNAVRLHYGLPVVVKLLHPPSHWPLIKATVGLIRNLALCPANHAPLREQGAIPRLVQLLVRAHQDTQRRTSMGGTQQQFVEGVRMEEIVEGCTGALHILARDIHNRIVIRGLNTIPLFVQLLYSPIENIQRVAAGVLCELAQDKEAAEAIEAEGATAPLTELLHSRNEGVATYAAAVLFRMSEDKPQDYKKRLSVELTSSLFRTEPMTWNETGDLGLDIGAQGEPLGYRQDDPSYRSFHSGGYGQDAMGMDPMMEHEMAGHHPGPDYPVDGLPDLGHTQDLIDGLPPGDSNQLAWFDTDL.

Residues 34–56 form a disordered region; it reads GIHSGATTTAPSLSGKGNPEDDD. 10 ARM repeats span residues 140–179, 224–263, 266–305, 350–389, 399–430, 431–472, 478–518, 520–561, 583–622, and 624–663; these read NYQD…QLSK, REGL…NLLL, EGAK…ILAY, SSNK…NLSD, GLLG…TCNN, YKNK…HLTS, EMAQ…NLAL, PANH…QFVE, IHNR…ELAQ, and KEAA…RMSE. Residues 735–744 show a composition bias toward basic and acidic residues; it reads EHEMAGHHPG. The segment at 735-770 is disordered; sequence EHEMAGHHPGPDYPVDGLPDLGHTQDLIDGLPPGDS.

It belongs to the beta-catenin family. As to quaternary structure, interacts with adnpa. Interacts with cdh1 during oogenesis and in the unfertilized egg. Interacts with ctnna1 and cdh2. In terms of processing, phosphorylation by gsk3b promotes ubiquitination and subsequent degradation by the proteasome. Ubiquitinated when phosphorylated by gsk3b, leading to its degradation. Expressed in the successional lamina, also expressed in both the epithelial and mesenchymal cells of the developing replacement tooth (at protein level). Expressed in the enamel organ as well as in the inner and outer dental epithelium during replacement tooth morphogenesis (at protein level). Expressed in the differentiated, polarized odontoblasts that line the dentine matrix as well as in the inner and outer dental epithelium during tooth cytodifferentiation (at protein level). Expressed in the reduced enamel organ, odontoblasts and weakly at the center of the dental papilla of the functional tooth as well as in the epithelial crypts surrounding the functional tooth (at protein level). Expressed in the liver (at protein level). Expressed at intercalated disks in the heart (at protein level). Expressed in the ovary.

It is found in the cytoplasm. The protein localises to the nucleus. The protein resides in the cell membrane. It localises to the cell junction. Its subcellular location is the adherens junction. Its function is as follows. Key downstream component of the canonical Wnt signaling pathway. In the absence of Wnt, forms a complex with axin1, axin2, apc, csnk1a1 and gsk3b that promotes phosphorylation on N-terminal Ser and Thr residues and ubiquitination of ctnnb1 and its subsequent degradation by the proteasome. In the presence of Wnt ligand, ctnnb1 is not ubiquitinated and accumulates in the nucleus, where it acts as a coactivator for transcription factors of the TCF/LEF family, leading to activate Wnt responsive genes. Plays a key role in dorsoventral patterning: in prospective ventral blastomeres, its down-regulation by axin1 and axin2 leads to inhibit the Wnt signaling pathway, while in prospective dorsal blastomeres, degradation of axin results in stabilization and nuclear translocation of ctnnb1. This is Catenin beta-1 from Danio rerio (Zebrafish).